The sequence spans 128 residues: Large ribosomal subunit protein bL17 (128 aa).

This sequence belongs to the bacterial ribosomal protein bL17 family. As to quaternary structure, part of the 50S ribosomal subunit. Contacts protein L32.

The chain is Large ribosomal subunit protein bL17 from Streptococcus pneumoniae serotype 2 (strain D39 / NCTC 7466).